Reading from the N-terminus, the 166-residue chain is 3-hydroxyacyl-[acyl-carrier-protein] dehydratase FabZ (166 aa).

H72 is a catalytic residue.

Belongs to the thioester dehydratase family. FabZ subfamily.

Its subcellular location is the cytoplasm. The enzyme catalyses a (3R)-hydroxyacyl-[ACP] = a (2E)-enoyl-[ACP] + H2O. Involved in unsaturated fatty acids biosynthesis. Catalyzes the dehydration of short chain beta-hydroxyacyl-ACPs and long chain saturated and unsaturated beta-hydroxyacyl-ACPs. This Synechococcus sp. (strain JA-3-3Ab) (Cyanobacteria bacterium Yellowstone A-Prime) protein is 3-hydroxyacyl-[acyl-carrier-protein] dehydratase FabZ.